A 434-amino-acid polypeptide reads, in one-letter code: Gamma-glutamyl phosphate reductase (434 aa).

The protein belongs to the gamma-glutamyl phosphate reductase family.

Its subcellular location is the cytoplasm. It carries out the reaction L-glutamate 5-semialdehyde + phosphate + NADP(+) = L-glutamyl 5-phosphate + NADPH + H(+). The protein operates within amino-acid biosynthesis; L-proline biosynthesis; L-glutamate 5-semialdehyde from L-glutamate: step 2/2. Functionally, catalyzes the NADPH-dependent reduction of L-glutamate 5-phosphate into L-glutamate 5-semialdehyde and phosphate. The product spontaneously undergoes cyclization to form 1-pyrroline-5-carboxylate. The protein is Gamma-glutamyl phosphate reductase of Trichormus variabilis (strain ATCC 29413 / PCC 7937) (Anabaena variabilis).